The chain runs to 249 residues: Probable transcriptional regulatory protein CYB_1350 (249 aa).

This sequence belongs to the TACO1 family.

It is found in the cytoplasm. The protein is Probable transcriptional regulatory protein CYB_1350 of Synechococcus sp. (strain JA-2-3B'a(2-13)) (Cyanobacteria bacterium Yellowstone B-Prime).